Here is a 764-residue protein sequence, read N- to C-terminus: Protein translocase subunit SecA 2 (764 aa).

ATP is bound by residues glutamine 83, 101 to 105 (GEGKT), and aspartate 490.

The protein belongs to the SecA family. As to quaternary structure, monomer and homodimer. Part of the essential Sec protein translocation apparatus which comprises SecA, SecYEG and auxiliary proteins SecDF. Other proteins may also be involved.

It localises to the cell membrane. The protein resides in the cytoplasm. It carries out the reaction ATP + H2O + cellular proteinSide 1 = ADP + phosphate + cellular proteinSide 2.. Its function is as follows. Part of the Sec protein translocase complex. Interacts with the SecYEG preprotein conducting channel. Has a central role in coupling the hydrolysis of ATP to the transfer of proteins into and across the cell membrane, serving as an ATP-driven molecular motor driving the stepwise translocation of polypeptide chains across the membrane. In Corynebacterium diphtheriae (strain ATCC 700971 / NCTC 13129 / Biotype gravis), this protein is Protein translocase subunit SecA 2.